A 1342-amino-acid polypeptide reads, in one-letter code: DNA-directed RNA polymerase subunit beta (1342 aa).

This sequence belongs to the RNA polymerase beta chain family. In terms of assembly, the RNAP catalytic core consists of 2 alpha, 1 beta, 1 beta' and 1 omega subunit. When a sigma factor is associated with the core the holoenzyme is formed, which can initiate transcription.

It catalyses the reaction RNA(n) + a ribonucleoside 5'-triphosphate = RNA(n+1) + diphosphate. Functionally, DNA-dependent RNA polymerase catalyzes the transcription of DNA into RNA using the four ribonucleoside triphosphates as substrates. This chain is DNA-directed RNA polymerase subunit beta, found in Colwellia psychrerythraea (strain 34H / ATCC BAA-681) (Vibrio psychroerythus).